We begin with the raw amino-acid sequence, 331 residues long: Ketol-acid reductoisomerase (NADP(+)) (331 aa).

One can recognise a KARI N-terminal Rossmann domain in the interval 2–182 (AKMYYDSDCN…GAGRAGILET (181 aa)). Residues 25-28 (YGSQ), Ser51, and 83-86 (DEKQ) each bind NADP(+). Residue His108 is part of the active site. Position 134 (Gly134) interacts with NADP(+). The KARI C-terminal knotted domain occupies 183-329 (TFREETETDL…AELRKMMSWL (147 aa)). Positions 191, 195, 227, and 231 each coordinate Mg(2+). Substrate is bound at residue Ser252.

This sequence belongs to the ketol-acid reductoisomerase family. Mg(2+) is required as a cofactor.

It carries out the reaction (2R)-2,3-dihydroxy-3-methylbutanoate + NADP(+) = (2S)-2-acetolactate + NADPH + H(+). The enzyme catalyses (2R,3R)-2,3-dihydroxy-3-methylpentanoate + NADP(+) = (S)-2-ethyl-2-hydroxy-3-oxobutanoate + NADPH + H(+). The protein operates within amino-acid biosynthesis; L-isoleucine biosynthesis; L-isoleucine from 2-oxobutanoate: step 2/4. Its pathway is amino-acid biosynthesis; L-valine biosynthesis; L-valine from pyruvate: step 2/4. Involved in the biosynthesis of branched-chain amino acids (BCAA). Catalyzes an alkyl-migration followed by a ketol-acid reduction of (S)-2-acetolactate (S2AL) to yield (R)-2,3-dihydroxy-isovalerate. In the isomerase reaction, S2AL is rearranged via a Mg-dependent methyl migration to produce 3-hydroxy-3-methyl-2-ketobutyrate (HMKB). In the reductase reaction, this 2-ketoacid undergoes a metal-dependent reduction by NADPH to yield (R)-2,3-dihydroxy-isovalerate. The polypeptide is Ketol-acid reductoisomerase (NADP(+)) (Ruminiclostridium cellulolyticum (strain ATCC 35319 / DSM 5812 / JCM 6584 / H10) (Clostridium cellulolyticum)).